Consider the following 241-residue polypeptide: Glucosamine-6-phosphate deaminase (241 aa).

Asp-67 functions as the Proton acceptor; for enolization step in the catalytic mechanism. Asn-136 serves as the catalytic For ring-opening step. Catalysis depends on His-138, which acts as the Proton acceptor; for ring-opening step. The For ring-opening step role is filled by Glu-143.

It belongs to the glucosamine/galactosamine-6-phosphate isomerase family. NagB subfamily.

The catalysed reaction is alpha-D-glucosamine 6-phosphate + H2O = beta-D-fructose 6-phosphate + NH4(+). It participates in amino-sugar metabolism; N-acetylneuraminate degradation; D-fructose 6-phosphate from N-acetylneuraminate: step 5/5. Catalyzes the reversible isomerization-deamination of glucosamine 6-phosphate (GlcN6P) to form fructose 6-phosphate (Fru6P) and ammonium ion. The sequence is that of Glucosamine-6-phosphate deaminase from Alkaliphilus oremlandii (strain OhILAs) (Clostridium oremlandii (strain OhILAs)).